The sequence spans 380 residues: Tryptophan 2,3-dioxygenase (380 aa).

Substrate contacts are provided by residues 57 to 61 and R128; that span reads FIITH. H313 is a heme binding site. A substrate-binding site is contributed by T328.

The protein belongs to the tryptophan 2,3-dioxygenase family. In terms of assembly, homotetramer. Dimer of dimers. Heme serves as cofactor.

The enzyme catalyses L-tryptophan + O2 = N-formyl-L-kynurenine. Its pathway is amino-acid degradation; L-tryptophan degradation via kynurenine pathway; L-kynurenine from L-tryptophan: step 1/2. It participates in pigment biosynthesis; ommochrome biosynthesis. Heme-dependent dioxygenase that catalyzes the oxidative cleavage of the L-tryptophan (L-Trp) pyrrole ring and converts L-tryptophan to N-formyl-L-kynurenine. Catalyzes the oxidative cleavage of the indole moiety. This Drosophila persimilis (Fruit fly) protein is Tryptophan 2,3-dioxygenase.